The sequence spans 144 residues: Transcriptional regulator SlyA (144 aa).

Positions 2-135 (ESPLGSDLSR…LSQMISKLEK (134 aa)) constitute an HTH marR-type domain. A DNA-binding region (H-T-H motif) is located at residues 49-72 (QIQLAKAIGIEQPSLVRTLDQLEE).

This sequence belongs to the SlyA family. Homodimer.

Functionally, transcription regulator that can specifically activate or repress expression of target genes. The polypeptide is Transcriptional regulator SlyA (Wigglesworthia glossinidia brevipalpis).